The following is a 246-amino-acid chain: tRNA pseudouridine synthase A (246 aa).

Catalysis depends on Asp-54, which acts as the Nucleophile. Position 112 (Tyr-112) interacts with substrate.

This sequence belongs to the tRNA pseudouridine synthase TruA family. In terms of assembly, homodimer.

The catalysed reaction is uridine(38/39/40) in tRNA = pseudouridine(38/39/40) in tRNA. Functionally, formation of pseudouridine at positions 38, 39 and 40 in the anticodon stem and loop of transfer RNAs. This is tRNA pseudouridine synthase A from Moorella thermoacetica (strain ATCC 39073 / JCM 9320).